The sequence spans 274 residues: Orotidine 5'-phosphate decarboxylase (274 aa).

Residues aspartate 40, 62-64 (KTH), 93-102 (DRKFVDIGNT), tyrosine 227, and arginine 245 contribute to the substrate site. Lysine 95 serves as the catalytic Proton donor.

It belongs to the OMP decarboxylase family.

It carries out the reaction orotidine 5'-phosphate + H(+) = UMP + CO2. Its pathway is pyrimidine metabolism; UMP biosynthesis via de novo pathway; UMP from orotate: step 2/2. The sequence is that of Orotidine 5'-phosphate decarboxylase (URA3) from Coccidioides posadasii (strain RMSCC 757 / Silveira) (Valley fever fungus).